The following is a 122-amino-acid chain: Small ribosomal subunit protein uS13 (122 aa).

A disordered region spans residues 95–122 (GLPVRGQRTHTNARTRKGPAKPIAGKKK).

The protein belongs to the universal ribosomal protein uS13 family. As to quaternary structure, part of the 30S ribosomal subunit. Forms a loose heterodimer with protein S19. Forms two bridges to the 50S subunit in the 70S ribosome.

In terms of biological role, located at the top of the head of the 30S subunit, it contacts several helices of the 16S rRNA. In the 70S ribosome it contacts the 23S rRNA (bridge B1a) and protein L5 of the 50S subunit (bridge B1b), connecting the 2 subunits; these bridges are implicated in subunit movement. Contacts the tRNAs in the A and P-sites. This Rhodospirillum rubrum (strain ATCC 11170 / ATH 1.1.1 / DSM 467 / LMG 4362 / NCIMB 8255 / S1) protein is Small ribosomal subunit protein uS13.